Here is a 311-residue protein sequence, read N- to C-terminus: Fucose-specific lectin (311 aa).

6 repeat units span residues 1-53 (MSTP…KNVI), 54-103 (AKAK…AGAK), 104-151 (FTVA…EGTN), 152-209 (LGVA…FDKA), 210-256 (PPRC…DKRT), and 257-311 (ITPV…PPAE). Residues 1 to 311 (MSTPGAQEVL…LGRRALPPAE (311 aa)) are 6 X approximate tandem repeats. Arg25, Glu37, Trp44, Arg73, Glu85, Trp94, Arg126, Glu138, Trp146, Arg177, Gln189, Trp198, Arg230, Gln242, Arg277, and Glu291 together coordinate beta-L-fucose.

It belongs to the fungal fucose-specific lectin family. As to quaternary structure, homodimer.

Functionally, lectin that specifically binds to L-fucose and weakly reacts with mannose and N-acetyl-neuraminic acid. Has strongest preference for the alpha-1,6-fucosylated chain (core fucose) on glycoproteins among alpha-1,2-, alpha-1,3-, alpha-1,4-, and alpha-1,6-fucosylated chains. Binds to fucose residues of IgE in mice and human, causing antigen-independent IgE-mediated mast cell activation and anaphylactoid reactions in mice and is possibly implicated in allergic response to Aspergillus oryzae in humans. Induces secretion of pro-inflammatory cytokines IL6 and IL8 implicated in ocular diseases such as mycotic keratitis, probably through its interaction with host toll-like receptors TLR2 and TLR4, followed by up-regulation of pro-inflammatory cytokines. This Aspergillus oryzae (strain ATCC 42149 / RIB 40) (Yellow koji mold) protein is Fucose-specific lectin.